Reading from the N-terminus, the 295-residue chain is tRNA dimethylallyltransferase (295 aa).

9–16 (GATATGKS) contributes to the ATP binding site. 11–16 (TATGKS) provides a ligand contact to substrate. Positions 34-37 (DSRQ) are interaction with substrate tRNA.

The protein belongs to the IPP transferase family. As to quaternary structure, monomer. Mg(2+) serves as cofactor.

It carries out the reaction adenosine(37) in tRNA + dimethylallyl diphosphate = N(6)-dimethylallyladenosine(37) in tRNA + diphosphate. In terms of biological role, catalyzes the transfer of a dimethylallyl group onto the adenine at position 37 in tRNAs that read codons beginning with uridine, leading to the formation of N6-(dimethylallyl)adenosine (i(6)A). The polypeptide is tRNA dimethylallyltransferase (Nostoc sp. (strain PCC 7120 / SAG 25.82 / UTEX 2576)).